Here is a 125-residue protein sequence, read N- to C-terminus: Small ribosomal subunit protein uS12c (125 aa).

It belongs to the universal ribosomal protein uS12 family. Part of the 30S ribosomal subunit.

The protein localises to the plastid. Its subcellular location is the chloroplast. In terms of biological role, with S4 and S5 plays an important role in translational accuracy. Located at the interface of the 30S and 50S subunits. This chain is Small ribosomal subunit protein uS12c (rps12), found in Nephroselmis olivacea (Green alga).